Reading from the N-terminus, the 150-residue chain is MSAKDERAREILRGFKLNWMNLRDAETGKILWQGTEDLSVPGVEHEARVPKKILKCKAVSRELNFSSAEQMEKFRLEQKVYFKGQCLEEWFFEFGFVIPNSTNTWQSLIEAAPESQMMPASVLTGNVIIETKFFDDDLLVSTSRVRLFYV.

The tract at residues 144–150 (RVRLFYV) is required for association with membranes.

It belongs to the PDE6D/unc-119 family. Interacts with the prenylated catalytic subunits of PDE6, an oligomer composed of two catalytic chains (PDE6A and PDE6B) and two inhibitory chains (gamma); has no effect on enzyme activity but promotes the release of the prenylated enzyme from cell membrane. Interacts with prenylated GRK1 and GRK7. Interacts with prenylated INPP5E. Interacts with prenylated Ras family members, including HRAS, KRAS, NRAS, RAP2A, RAP2C and RHEB. Interacts with RAB13 (prenylated form); dissociates RAB13 from membranes. Interacts with RAB28 (prenylated form); the interaction promotes RAB28 delivery to the photoreceptor outer segments. Interacts with RPGR. Interacts with ARL2. Interacts with ARL3; the interaction occurs specifically with the GTP-bound form of ARL3. Interaction with ARL2 and ARL3 promotes release of farnesylated cargo proteins. In terms of tissue distribution, detected in retina photoreceptor cells, especially in rods (at protein level). Detected in retina, brain and adrenal gland.

The protein resides in the cytoplasm. Its subcellular location is the cytosol. It is found in the cytoplasmic vesicle membrane. It localises to the cytoskeleton. The protein localises to the cilium basal body. Functionally, promotes the release of prenylated target proteins from cellular membranes. Modulates the activity of prenylated or palmitoylated Ras family members by regulating their subcellular location. Required for normal ciliary targeting of farnesylated target proteins, such as INPP5E. Modulates the subcellular location of target proteins by acting as a GTP specific dissociation inhibitor (GDI). Required for RAB28 localization to the cone cell outer segments in the retina. Increases the affinity of ARL3 for GTP by several orders of magnitude. Stabilizes ARL3-GTP by decreasing the nucleotide dissociation rate. This Bos taurus (Bovine) protein is Retinal rod rhodopsin-sensitive cGMP 3',5'-cyclic phosphodiesterase subunit delta (PDE6D).